We begin with the raw amino-acid sequence, 101 residues long: Helix-loop-helix protein 17 (101 aa).

Residues 14–27 (GVRLSINLRERCRM) form a basic motif region. In terms of domain architecture, bHLH spans 14–68 (GVRLSINLRERCRMHDLNEALDDLRAVIPYAHGGSVRKLSKIATLLLAKNHIIMQ). A helix-loop-helix motif region spans residues 28-68 (HDLNEALDDLRAVIPYAHGGSVRKLSKIATLLLAKNHIIMQ).

As to expression, expressed in neuronal tissues of the head, including sheath cells of the cephalic sensilla (CEPsh) glia.

The protein resides in the nucleus. Its function is as follows. Probable transcription factor that regulates the expression of dopamine receptors dop-1, dop-2 and dop-3 and thus dopamine-dependent behaviors. May act redundantly with hlh-31 and hlh-32 to regulate ventral CEPsh glia functions. May play a role in chemotactic responses in larvae. This chain is Helix-loop-helix protein 17, found in Caenorhabditis elegans.